Reading from the N-terminus, the 486-residue chain is ATP synthase subunit beta (486 aa).

164 to 171 (GGAGVGKT) is an ATP binding site.

This sequence belongs to the ATPase alpha/beta chains family. F-type ATPases have 2 components, CF(1) - the catalytic core - and CF(0) - the membrane proton channel. CF(1) has five subunits: alpha(3), beta(3), gamma(1), delta(1), epsilon(1). CF(0) has four main subunits: a(1), b(1), b'(1) and c(9-12).

The protein localises to the cellular thylakoid membrane. The enzyme catalyses ATP + H2O + 4 H(+)(in) = ADP + phosphate + 5 H(+)(out). In terms of biological role, produces ATP from ADP in the presence of a proton gradient across the membrane. The catalytic sites are hosted primarily by the beta subunits. This is ATP synthase subunit beta from Prochlorococcus marinus (strain MIT 9312).